The following is a 353-amino-acid chain: D-alanine--D-alanine ligase A (353 aa).

In terms of domain architecture, ATP-grasp spans 141–346 (KRLVNEAGLS…YPEIINRLVA (206 aa)). 169–224 (EQALGLPIFIKPARQGSSVGVHKVVTEADYQAAMSDGFTYDDKLLAEEFIQAREVE) is an ATP binding site. The Mg(2+) site is built by aspartate 300, glutamate 313, and asparagine 315.

This sequence belongs to the D-alanine--D-alanine ligase family. Requires Mg(2+) as cofactor. Mn(2+) serves as cofactor.

It is found in the cytoplasm. The enzyme catalyses 2 D-alanine + ATP = D-alanyl-D-alanine + ADP + phosphate + H(+). It participates in cell wall biogenesis; peptidoglycan biosynthesis. Its function is as follows. Cell wall formation. The sequence is that of D-alanine--D-alanine ligase A from Brucella suis biovar 1 (strain 1330).